We begin with the raw amino-acid sequence, 541 residues long: MAGAIIENMSTKKLCIVGGILLVFQIIAFLVGGLIAPGPTTAVSYMSVKCVDARKNHHKTKWFVPWGPNHCDKIRDIEEAIPREIEANDIVFSVHIPLPHMEMSPWFQFMLFILQLDIAFKLNNQIRENAEVSMDVSLAYRDDAFAEWTEMAHERVPRKLKCTFTSPKTPEHEGRYYECDVLPFMEIGSVAHKFYLLNIRLPVNEKKKINVGIGEIKDIRLVGIHQNGGFTKVWFAMKTFLTPSIFIIMVWYWRRITMMSRPPVLLEKVIFALGISMTFINIPVEWFSIGFDWTWMLLFGDIRQGIFYAMLLSFWIIFCGEHMMDQHERNHIAGYWKQVGPIAVGSFCLFIFDMCERGVQLTNPFYSIWTTDIGTELAMAFIIVAGICLCLYFLFLCFMVFQVFRNISGKQSSLPAMSKVRRLHYEGLIFRFKFLMLITLACAAMTVIFFIVSQVTEGHWKWGGVTVQVNSAFFTGIYGMWNLYVFALMFLYAPSHKNYGEDQSNGDLGVHSGEELQLTTTITHVDGPTEIYKLTRKEAQE.

Over 1 to 15 (MAGAIIENMSTKKLC) the chain is Cytoplasmic. Residues 16 to 36 (IVGGILLVFQIIAFLVGGLIA) traverse the membrane as a helical segment. The Lumenal segment spans residues 37–232 (PGPTTAVSYM…GIHQNGGFTK (196 aa)). The tract at residues 101–232 (MEMSPWFQFM…GIHQNGGFTK (132 aa)) is interaction with Wnt proteins. A helical membrane pass occupies residues 233–253 (VWFAMKTFLTPSIFIIMVWYW). The Cytoplasmic segment spans residues 254–268 (RRITMMSRPPVLLEK). A helical membrane pass occupies residues 269 to 289 (VIFALGISMTFINIPVEWFSI). Over 290–303 (GFDWTWMLLFGDIR) the chain is Lumenal. A helical transmembrane segment spans residues 304–324 (QGIFYAMLLSFWIIFCGEHMM). At 325-331 (DQHERNH) the chain is on the cytoplasmic side. Residues 332-352 (IAGYWKQVGPIAVGSFCLFIF) traverse the membrane as a helical segment. Topologically, residues 353–380 (DMCERGVQLTNPFYSIWTTDIGTELAMA) are lumenal. Residues 381–401 (FIIVAGICLCLYFLFLCFMVF) form a helical membrane-spanning segment. The Cytoplasmic segment spans residues 402 to 431 (QVFRNISGKQSSLPAMSKVRRLHYEGLIFR). Residues 432-452 (FKFLMLITLACAAMTVIFFIV) traverse the membrane as a helical segment. Topologically, residues 453 to 471 (SQVTEGHWKWGGVTVQVNS) are lumenal. A helical transmembrane segment spans residues 472–492 (AFFTGIYGMWNLYVFALMFLY). Residues 493–541 (APSHKNYGEDQSNGDLGVHSGEELQLTTTITHVDGPTEIYKLTRKEAQE) lie on the Cytoplasmic side of the membrane.

The protein belongs to the wntless family. As to quaternary structure, interacts with WNT3A. Interacts with WNT1, WNT3 and WNT5A. N-glycosylated.

Its subcellular location is the golgi apparatus membrane. It localises to the cytoplasmic vesicle membrane. The protein localises to the cell membrane. The protein resides in the endoplasmic reticulum membrane. It is found in the early endosome membrane. Regulates Wnt proteins sorting and secretion in a feedback regulatory mechanism. This reciprocal interaction plays a key role in the regulation of expression, subcellular location, binding and organelle-specific association of Wnt proteins. Plays also an important role in establishment of the anterior-posterior body axis formation during development. This Homo sapiens (Human) protein is Protein wntless homolog (WLS).